Reading from the N-terminus, the 197-residue chain is Ion-translocating oxidoreductase complex subunit B (197 aa).

Positions methionine 1–serine 26 are hydrophobic. In terms of domain architecture, 4Fe-4S spans glutamate 32–valine 90. Residues cysteine 49, cysteine 52, cysteine 57, cysteine 73, cysteine 114, cysteine 117, cysteine 120, cysteine 124, cysteine 144, cysteine 147, cysteine 150, and cysteine 154 each contribute to the [4Fe-4S] cluster site. 4Fe-4S ferredoxin-type domains are found at residues threonine 105 to lysine 134 and alanine 135 to valine 164.

This sequence belongs to the 4Fe4S bacterial-type ferredoxin family. RnfB subfamily. In terms of assembly, the complex is composed of six subunits: RnfA, RnfB, RnfC, RnfD, RnfE and RnfG. Requires [4Fe-4S] cluster as cofactor.

The protein resides in the cell inner membrane. Functionally, part of a membrane-bound complex that couples electron transfer with translocation of ions across the membrane. In Vibrio atlanticus (strain LGP32) (Vibrio splendidus (strain Mel32)), this protein is Ion-translocating oxidoreductase complex subunit B.